The following is a 225-amino-acid chain: 2-C-methyl-D-erythritol 4-phosphate cytidylyltransferase (225 aa).

The protein belongs to the IspD/TarI cytidylyltransferase family. IspD subfamily.

The catalysed reaction is 2-C-methyl-D-erythritol 4-phosphate + CTP + H(+) = 4-CDP-2-C-methyl-D-erythritol + diphosphate. It participates in isoprenoid biosynthesis; isopentenyl diphosphate biosynthesis via DXP pathway; isopentenyl diphosphate from 1-deoxy-D-xylulose 5-phosphate: step 2/6. Catalyzes the formation of 4-diphosphocytidyl-2-C-methyl-D-erythritol from CTP and 2-C-methyl-D-erythritol 4-phosphate (MEP). This chain is 2-C-methyl-D-erythritol 4-phosphate cytidylyltransferase, found in Clostridium perfringens (strain SM101 / Type A).